Reading from the N-terminus, the 496-residue chain is MKYILSIDQGTTSSRAIIFDRNANIKGFAQKDFKQIYPHPSWVEHNPNEIWSSLLEIISEALANARTHPNEIATIGITNQRETTIIWDRYTGQPIYNAIVWQDRRTAKICDELKTQGKDKIFLEKTGLVLDPYFSGTKIKWILDNVSQARERAEKGELCFGTIDTWIIWNLTKGKIHITDYSNASRTLLLNINSLNWDDDLLQILNIPKSILPELKQSSEIYGKIDSSIMGTEINISGIAGDQFAATFGQSCLQKGMAKNTYGTGCFTTVNIGHKPIINEQKILTSIAWVKKNITTYVFEGSIFIGGAVIQWLRDNLELFKKSSDAEILAASVNNNGGIYFVPAFVGLGTPHWDPYARGTIIGLTRSSTKEHITRAALESIAFQSFDVLTEMKNSIKGFDIKELRVDGKASQNNLLMQFQADILQCNVVRPKITETTALGAAYLAGLAIGYWENTEEITSLWKSDKIFEPLMKQSQREDLIYNWHKAINRAKSWIE.

Position 11 (Thr-11) interacts with ADP. ATP contacts are provided by Thr-11, Thr-12, and Ser-13. Thr-11 is a sn-glycerol 3-phosphate binding site. Position 15 (Arg-15) interacts with ADP. The sn-glycerol 3-phosphate site is built by Arg-81, Glu-82, Tyr-133, and Asp-242. Residues Arg-81, Glu-82, Tyr-133, Asp-242, and Gln-243 each coordinate glycerol. Residues Thr-264 and Gly-307 each coordinate ADP. Residues Thr-264, Gly-307, and Gln-311 each coordinate ATP. Position 413 (Asn-413) interacts with ADP.

Belongs to the FGGY kinase family.

The catalysed reaction is glycerol + ATP = sn-glycerol 3-phosphate + ADP + H(+). It participates in polyol metabolism; glycerol degradation via glycerol kinase pathway; sn-glycerol 3-phosphate from glycerol: step 1/1. Its activity is regulated as follows. Inhibited by fructose 1,6-bisphosphate (FBP). Its function is as follows. Key enzyme in the regulation of glycerol uptake and metabolism. Catalyzes the phosphorylation of glycerol to yield sn-glycerol 3-phosphate. This Borrelia duttonii (strain Ly) protein is Glycerol kinase.